The chain runs to 81 residues: High-potential iron-sulfur protein (81 aa).

The [4Fe-4S] cluster site is built by Cys43, Cys46, Cys59, and Cys73.

The protein belongs to the high-potential iron-sulfur protein (HiPIP) family. In terms of assembly, homodimer.

Its function is as follows. Specific class of high-redox-potential 4Fe-4S ferredoxins. Functions in anaerobic electron transport in most purple and in some other photosynthetic bacteria and in at least one genus (Paracoccus) of halophilic, denitrifying bacteria. The sequence is that of High-potential iron-sulfur protein (hip) from Thiococcus pfennigii (Thiocapsa pfennigii).